The primary structure comprises 353 residues: Guanine nucleotide-binding protein subunit alpha (353 aa).

The disordered stretch occupies residues 1 to 25 (MGCGMSTEDKEGKARNEEIENQLKR). A lipid anchor (N-myristoyl glycine) is attached at G2. C3 carries S-palmitoyl cysteine lipidation. Positions 7-25 (TEDKEGKARNEEIENQLKR) are enriched in basic and acidic residues. The 322-residue stretch at 32-353 (NEIKMLLLGA…QENLRLCGLI (322 aa)) folds into the G-alpha domain. The tract at residues 35–48 (KMLLLGAGESGKST) is G1 motif. E43, S44, G45, K46, S47, T48, D150, L175, T181, G203, N269, K270, D272, and A325 together coordinate GTP. S47 is a binding site for Mg(2+). Positions 173–181 (DVLRSRVKT) are G2 motif. T181 is a binding site for Mg(2+). A G3 motif region spans residues 196–205 (YRMFDVGGQR). Residues 265-272 (ILFLNKID) are G4 motif. The G5 motif stretch occupies residues 323–328 (TCATDT).

This sequence belongs to the G-alpha family. G(q) subfamily. As to quaternary structure, g proteins are composed of 3 units; alpha, beta and gamma. The alpha chain contains the guanine nucleotide binding site. Requires Mg(2+) as cofactor.

In terms of biological role, guanine nucleotide-binding proteins (G proteins) are involved as modulators or transducers in various transmembrane signaling systems. In Colletotrichum trifolii, this protein is Guanine nucleotide-binding protein subunit alpha (CTG1).